The primary structure comprises 2566 residues: MTPEPIAIIGTGCKFPGSASSPSRLWDLLRNPKTVASEPPSTRFDNRSFYDPDPSHPGTTNTKESYFLSEDIRLFDSAFFNISASEAEGIDPQQRLLLETVYESLEIAGQRLEALQGSSTGIFCGVMGNDWEHRVGFDDKAIPRYAATGLARNNIANRVSYFFDWHGPSLVVDTACSSSLVALHQAVTALRQGECSVAVAAGTNLLLHPNIYISTSNLQMLSPNGRGRMWDAKADGYARGEGIGALVLKCLSDAIADGDPIECVIRATGVNQDGRTMGLTMPSSKAQLALIESTYAQAGLDPKTRPEDRCQYFEAHGTGTLAGDPQEASAIYKSFFGDSSQHVSDNDPLYVGSIKTVVGHTEGTAGIAGVIKASLSIQHGTIFPNLLFDELNPELQRFTPRLKVPTETMPWPTLAPNIPRRVSVNSFGFGGTNAHAILESYDIECDENWNGIPPQISNPIVLPFLFSAASARSLGTMLSNYEEYLRSNPKIHLMDLAWTLMKRRSMLAYRVVLCAPTIEVLIIKIREELELRKINNPSTITAQPPSGQKRILGIFTGQGAQWPQMGLDLVTHTSEGRQLFEEMHQSLLSLPIELQPTFSLFDELAAAQPMSRLHEAVLSQPLCAALQIILVNFLTAVGISFETVVGHSSGEIAAAYSAGILSASDCIRVAYLRGRVAGLAGAPNGQPGAMLAVGLSFATANLLCLEPGLQGRVHVAASNSPSSVTLSGDQDAIHEVEQRLQVEGKFARMLRVDTAYHSHHMQPCAKPYLLDMDAAQVKLGLQMNTRWYSSVHDAQEINLDEHGQSLTGEYWKNNMVSPVLFSAALLAALTSDGGPPDVIVEIGPHPALKGPAQQTISDALPSAGGSEIPYIGLSNRGASGIESLANAIGLLCAHLGPNSIDLARYFSLFDHKYTPKVVRGLPAYPFDHRQRHWFETRKLKNHLHNGGLLHPLLGSLEADTADGEWRWRHYLRREELEWLDGHQIQSRTVFPATGYIAMALEAAGIFAAGQSMRLVQIQRLSIDQAITFSDESSTGIETLFRLSGLQSQGDQVTGTFNCHANIGGRLVNCASGKLLICWGNPETSMLPSQTPPAADAGAVDIKDFYQSLAKLGYNYTGAFQGITSLARQKDMSTGQIINMGQLSHESSLLFHPVMMDTSLQMLLGALGAPGDGSLYTLMVPTGIERVTINPAFCGPKGAKAAGRTLFADAFITQLDTDGCSGAVEVFTQEGNGMVQMEGVHISPLGPPDRQRQPFSEIAWGPLTPDAGLHSYPYPADLMNHTLLMEQISLINIKQVVDQLTDKDRSGLDWHRSRVVAWMEHVLAMTRTGKHPTCRSEWLDGTQEDIEVLLERLAPSVTGLLAGVVGANMLRFLRGETSMLEEARKDDVLSRFYKEDPESKTMNDRLGDLVGQIAFRYPRMKILEIGAGSGSATKSILERIGSSYHSYTFTDISPGFFEEAKQQFAEHQDHFIYQVLNVEKDPSKQGFEDDSYDLVIAANVLHATKSMKDTMTNVRRLLKPGGYLGLMEVTNTSTIGISFCVGGFEGWWAGEGDGRVWGPMLNASNWENVLQDTGFGGIDTITTLGDARLSAYSVLVSQAVDDRMKVLRQPLSPAHQLKDTAGELVIVGGEKDQTVSLVEEVAHLLEPFFARIVPVQTLELLKGVNISPYATVLSLVDMDGPCFEYLSQSRLQGLQALTVAARKMLWVTTGRECDSPHLGMSKGWLKCLSYEHPEAQYQYLNITDDSTEESTLIAATLMRLVRTDEGNDYSLSSRTSATEPELRFQNGTMSIPRLRASPELNDRYVAGQQLVHKPVNLLESTVRMLPSAKGHYALHLEDKSLVSSHRADIDTELVRIRTRYSTIQAVRVGKDDVFLHLVLGEQEHSHRRLLAYSKDHASIITTPMSWCCDLPDAVRPEFENSFLQATLAAVLARVLVQQATPGSVLWAHEASGVLQQAIRIHAVASGVRPHFTTSSQSLPMEGVSFIHPLVTSRKLVGYLPQDVSVAACFEVEEQGDEGIFSRIKSLLPQCVTVEDTHSLWRTSQQLPEHGNVHHRHLGESLNVASAMAIQFVTSDPTQPVDVKGLSALPPTPRTPKADCIVKWTGSQNEALNVQVKTASQTLTLSSQKTYLLVGMTGDLGRSICHWLITKGARHVVLTSRSPKVDPHWIQEMSKLGANVVPMQLDVSNRESLLHVCDKIQKYHPRIGGVVNGALVLNDCAFDEMPLETMQATFAAKVDGSILLDELFRGDLDFFILMGSLTGIVGNWNQSAYSAATGFQSNLIHQRRARNIVGSIIQPGIITSVGYISRKGSGLAQHVSNTVGSLLLSERDLHEVFAEAILAGHPETSRNPEIVAGMPMANPVTQPDIIWYRNPLCWDFVDYRIQSSSANHAGDGNTCSMKARLESAASMSEAAEIVAAGLADKVRSKFNLASDIALTQDTQLSDLGIDSLVAVDLRSWFVRELSVEIPMLQILSGSSLRALTADSVSKLPPTLLPGILSRDQDFKDVSGLTSPPEVPSDASRSSVSSGMDEIVTPESPSFDQVYRIAGDEMELTKPHQRPIPTPQL.

Residues 3-440 form the Ketosynthase family 3 (KS3) domain; sequence PEPIAIIGTG…GTNAHAILES (438 aa). The tract at residues 35–61 is disordered; it reads VASEPPSTRFDNRSFYDPDPSHPGTTN. The segment covering 44–54 has biased composition (basic and acidic residues); sequence FDNRSFYDPDP. Residues Cys-176, His-316, and His-360 each act as for beta-ketoacyl synthase activity in the active site. The segment at 554–880 is malonyl-CoA:ACP transacylase (MAT) domain; the sequence is IFTGQGAQWP…IGLSNRGASG (327 aa). Ser-648 (for malonyltransferase activity) is an active-site residue. Positions 950–1081 are N-terminal hotdog fold; that stretch reads HPLLGSLEAD…GKLLICWGNP (132 aa). The segment at 950-1246 is dehydratase (DH) domain; that stretch reads HPLLGSLEAD…EGVHISPLGP (297 aa). The PKS/mFAS DH domain occupies 950 to 1250; the sequence is HPLLGSLEAD…ISPLGPPDRQ (301 aa). His-982 (proton acceptor; for dehydratase activity) is an active-site residue. The interval 1096–1250 is C-terminal hotdog fold; the sequence is AGAVDIKDFY…ISPLGPPDRQ (155 aa). Asp-1156 acts as the Proton donor; for dehydratase activity in catalysis. Positions 1386–1581 are methyltransferase (CMet) domain; the sequence is DVLSRFYKED…TGFGGIDTIT (196 aa). Positions 2127–2294 are ketoreductase (KR) domain; the sequence is KTYLLVGMTG…RRARNIVGSI (168 aa). One can recognise a Carrier domain in the interval 2411–2489; it reads EAAEIVAAGL…ALTADSVSKL (79 aa). The residue at position 2449 (Ser-2449) is an O-(pantetheine 4'-phosphoryl)serine. Positions 2505–2540 are disordered; sequence KDVSGLTSPPEVPSDASRSSVSSGMDEIVTPESPSF. Residues 2518–2527 show a composition bias toward low complexity; it reads SDASRSSVSS.

Pantetheine 4'-phosphate is required as a cofactor.

Its pathway is secondary metabolite biosynthesis; terpenoid biosynthesis. The protein operates within mycotoxin biosynthesis. In terms of biological role, highly reducing polyketide synthase (HR-PKS); part of the gene cluster that mediates the biosynthesis of the neurotoxin verrucosidin, a methylated alpha-pyrone polyketide that inhibits oxidative phosphorylation in mitochondria and thereby causes neurological diseases. The carbon backbone of verrucosidin is synthesized by the HR-PKS verA, and further modified by the other verrucodidin cluster enzymes. This is Highly reducing polyketide synthase verA from Penicillium polonicum.